The following is a 436-amino-acid chain: ATP-dependent protease ATPase subunit HslU (436 aa).

Residues isoleucine 18, 60-65 (GVGKTE), aspartate 249, glutamate 314, and arginine 386 each bind ATP.

Belongs to the ClpX chaperone family. HslU subfamily. A double ring-shaped homohexamer of HslV is capped on each side by a ring-shaped HslU homohexamer. The assembly of the HslU/HslV complex is dependent on binding of ATP.

The protein localises to the cytoplasm. Its function is as follows. ATPase subunit of a proteasome-like degradation complex; this subunit has chaperone activity. The binding of ATP and its subsequent hydrolysis by HslU are essential for unfolding of protein substrates subsequently hydrolyzed by HslV. HslU recognizes the N-terminal part of its protein substrates and unfolds these before they are guided to HslV for hydrolysis. The chain is ATP-dependent protease ATPase subunit HslU from Ruegeria sp. (strain TM1040) (Silicibacter sp.).